The chain runs to 475 residues: Endoglucanase A (475 aa).

The first 26 residues, 1–26, serve as a signal peptide directing secretion; sequence MKKTTAFLLCFLMIFTALLPMQNANA. Residue His147 is part of the active site. Glu195 functions as the Proton donor in the catalytic mechanism. Glu332 acts as the Nucleophile in catalysis. Residues 409-474 form the Dockerin domain; sequence PVIVYGDYNN…LLGMVSKLPS (66 aa).

Belongs to the glycosyl hydrolase 5 (cellulase A) family.

It carries out the reaction Endohydrolysis of (1-&gt;4)-beta-D-glucosidic linkages in cellulose, lichenin and cereal beta-D-glucans.. Functionally, the biological conversion of cellulose to glucose generally requires three types of hydrolytic enzymes: (1) Endoglucanases which cut internal beta-1,4-glucosidic bonds; (2) Exocellobiohydrolases that cut the disaccharide cellobiose from the non-reducing end of the cellulose polymer chain; (3) Beta-1,4-glucosidases which hydrolyze the cellobiose and other short cello-oligosaccharides to glucose. The chain is Endoglucanase A (celCCA) from Ruminiclostridium cellulolyticum (strain ATCC 35319 / DSM 5812 / JCM 6584 / H10) (Clostridium cellulolyticum).